Reading from the N-terminus, the 1058-residue chain is Carbamoyl phosphate synthase large chain (1058 aa).

A carboxyphosphate synthetic domain region spans residues 1–401 (MPKRTDIQKI…SLLKACRSLE (401 aa)). ATP-binding residues include Arg129, Arg169, Gly175, Gly176, Arg208, Ile210, Glu215, Gly241, Ile242, His243, Gln284, and Glu298. The 195-residue stretch at 133 to 327 (KQLMEELEQP…IAKLAAKIAV (195 aa)) folds into the ATP-grasp 1 domain. The Mg(2+) site is built by Gln284, Glu298, and Asn300. Residues Gln284, Glu298, and Asn300 each contribute to the Mn(2+) site. The oligomerization domain stretch occupies residues 402–546 (IGVHHNEIPE…YSTYGWENES (145 aa)). A carbamoyl phosphate synthetic domain region spans residues 547 to 929 (IRSDKESVLV…ALYKAFEASY (383 aa)). In terms of domain architecture, ATP-grasp 2 spans 671–861 (EQALKELDIP…MAQVATKLIL (191 aa)). ATP contacts are provided by Arg707, Ser746, Ile748, Glu752, Gly777, Val778, His779, Ser780, Gln820, and Glu832. Residues Gln820, Glu832, and Asn834 each contribute to the Mg(2+) site. 3 residues coordinate Mn(2+): Gln820, Glu832, and Asn834. Positions 930-1058 (LHLPTFGNVV…ESRSFVTEAI (129 aa)) constitute an MGS-like domain. An allosteric domain region spans residues 930 to 1058 (LHLPTFGNVV…ESRSFVTEAI (129 aa)).

This sequence belongs to the CarB family. In terms of assembly, composed of two chains; the small (or glutamine) chain promotes the hydrolysis of glutamine to ammonia, which is used by the large (or ammonia) chain to synthesize carbamoyl phosphate. Tetramer of heterodimers (alpha,beta)4. Mg(2+) serves as cofactor. Requires Mn(2+) as cofactor.

It carries out the reaction hydrogencarbonate + L-glutamine + 2 ATP + H2O = carbamoyl phosphate + L-glutamate + 2 ADP + phosphate + 2 H(+). It catalyses the reaction hydrogencarbonate + NH4(+) + 2 ATP = carbamoyl phosphate + 2 ADP + phosphate + 2 H(+). Its pathway is amino-acid biosynthesis; L-arginine biosynthesis; carbamoyl phosphate from bicarbonate: step 1/1. It participates in pyrimidine metabolism; UMP biosynthesis via de novo pathway; (S)-dihydroorotate from bicarbonate: step 1/3. Functionally, large subunit of the glutamine-dependent carbamoyl phosphate synthetase (CPSase). CPSase catalyzes the formation of carbamoyl phosphate from the ammonia moiety of glutamine, carbonate, and phosphate donated by ATP, constituting the first step of 2 biosynthetic pathways, one leading to arginine and/or urea and the other to pyrimidine nucleotides. The large subunit (synthetase) binds the substrates ammonia (free or transferred from glutamine from the small subunit), hydrogencarbonate and ATP and carries out an ATP-coupled ligase reaction, activating hydrogencarbonate by forming carboxy phosphate which reacts with ammonia to form carbamoyl phosphate. The polypeptide is Carbamoyl phosphate synthase large chain (Streptococcus pneumoniae serotype 2 (strain D39 / NCTC 7466)).